The sequence spans 359 residues: Chorismate synthase (359 aa).

Arginine 48 and arginine 54 together coordinate NADP(+). Residues 125–127 (RSS), 243–244 (NA), glycine 283, 298–302 (KPTSS), and arginine 324 each bind FMN.

The protein belongs to the chorismate synthase family. As to quaternary structure, homotetramer. FMNH2 is required as a cofactor.

It catalyses the reaction 5-O-(1-carboxyvinyl)-3-phosphoshikimate = chorismate + phosphate. It participates in metabolic intermediate biosynthesis; chorismate biosynthesis; chorismate from D-erythrose 4-phosphate and phosphoenolpyruvate: step 7/7. Functionally, catalyzes the anti-1,4-elimination of the C-3 phosphate and the C-6 proR hydrogen from 5-enolpyruvylshikimate-3-phosphate (EPSP) to yield chorismate, which is the branch point compound that serves as the starting substrate for the three terminal pathways of aromatic amino acid biosynthesis. This reaction introduces a second double bond into the aromatic ring system. The chain is Chorismate synthase from Mannheimia succiniciproducens (strain KCTC 0769BP / MBEL55E).